Here is a 1923-residue protein sequence, read N- to C-terminus: MKSPALQPLSMAGLQLMTPASSPMGPFFGLPWQQEAIHDNIYTPRKYQVELLEAALDHNTIVCLNTGSGKTFIAVLLTKELSYQIRGDFNRNGKRTVFLVNSANQVAQQVSAVRTHSDLKVGEYSNLEVSASWTKEKWNQEFTKHQVLIMTCYVALNVLKNGYLSLSDINLLVFDECHLAILDHPYREIMKLCENCPSCPRILGLTASILNGKCDPEELEEKIQKLEKILKSNAETATDLVVLDRYTSQPCEIVVDCGPFTDRSGLYERLLMELEEALNFINDCNISVHSKERDSTLISKQILSDCRAVLVVLGPWCADKVAGMMVRELQKHIKHEQEELHRKFLLFTDTFLRKIHALCEEHFSPASLDLKFVTPKVIKLLEILRKYKPYERQQFESVEWYNNRNQDNYVSWSDSEDDEEDEEIEEKEKPETNFPSPFTNILCGIIFVERRYTAVVLNRLIKEAGKQDPELAYISSNFITGHGIGKNQPRNKQMEAEFRKQEEVLRKFRAHETNLLIATSIVEEGVDIPKCNLVVRFDLPTEYRSYVQSKGRARAPISNYVMLADTDKIKSFEEDLKTYKAIEKILRNKCSKSVDTGEADTEPVVDDDDVFPPYVLRPEDGPRVTINTAIGHVNRYCARLPSDPFTHLAPKCRTRELPDGTFYSTLYLPINSPLRASIVGPPMSCIRLAERVVALICCEKLHKIGELDDHLMPVGKETVKYEEELDLHDEEETSVPGRPGSTKRRQCYPKAIPECLRESYPRPGQPCYLYVIGMVLTTPLPDELNFRRRKLYPPEDTTRCFGILTAKPIPQIPHFPVYTRSGEVTISIELKKSGFTLSLQMLELITRLHQYIFSHILRLEKPALEFKPTDADSAYCVLPLNVVNDSSTLDIDFKFMEDIEKSEARIGIPSTKYSKETPFVFKLEDYQDAVIIPRYRNFDQPHRFYVADVYTDLTPLSKFPSPEYETFAEYYKTKYNLDLTNLNQPLLDVDHTSSRLNLLTPRHLNQKGKALPLSSAEKRKAKWESLQNKQILVPELCAIHPIPASLWRKAVCLPSILYRLHCLLTAEELRAQTASDAGVGVRSLPVDFRYPNLDFGWKKSIDSKSFISIANSSSAENENYCKHSTIVVPENAAHQGANRTSPLENHDQMSVNCRTLFSESPGKLQIEVSTDLTAINGLSYNKSLANGSYDLANRDFCQGNHLNYYKQEIPVQPTTSYPIQNLYNYENQPKPSDECTLLSNKYLDGNANTSTSDGSPVTAAVPGTTETGEAPPDRTASEQSPSPGYSSRTLGPNPGLILQALTLSNASDGFNLERLEMLGDSFLKHAITTVSLSALILDAHEGRLSYMRSKKVSNCNLYRLGKKKGLPSRMVVSIFDPPVNGLPPGYVVNQDKSNTEKWEKDEMTKDCMLANGKLDDDFEEEEEEEEDLMWRAHKEDADDEDDFLEYDQEHIKFIDNMLMGSGAFVKKISLSPFSATDSAYEWKMPKKSSLGSLPFSSDFEDFDYSSWDAMCYLDPSKAVEEDDFVVGFWNPSEENCGVDTGKQSISYDLHTEQCIADKSIADCVEALLGCYLTSCGERAAQLFLCSLGLKVLPVIKRTDREKAMCPTRENFTSQQKNLSGSRAAASGAGYRASVLKDLEYGCLKIPPRCMFDHPEADRTLRHLISGFENFEKKINYRFKNKAYLLQAFTHASYHYNTITDCYQRLEFLGDAILDYLITKHLYEDPRQHSPGVLTDLRSALVNNTIFASLAVKYDYHKYFKAVSPELFHVIDDFVQFQLEKNEMQGMDSELRRSEEDEEKEEDIEVPKAMGDIFESLAGAIYMDSGMSLETVWQVYYPMMRPLIEKFSANVPRSPVRELLEMEPEITKFSPAERTYDGKVRVTVEVVGKGKFKGVGRSYRIAKSAAARRALRSLKANQPQVPNS.

One can recognise a Helicase ATP-binding domain in the interval 51 to 227 (LLEAALDHNT…ELEEKIQKLE (177 aa)). 64–71 (LNTGSGKT) contributes to the ATP binding site. A DECH box motif is present at residues 175–178 (DECH). The tract at residues 256-595 (DCGPFTDRSG…LRNKCSKSVD (340 aa)) is required for interaction with PRKRA and TARBP2. The tract at residues 410–433 (VSWSDSEDDEEDEEIEEKEKPETN) is disordered. Phosphoserine occurs at positions 413 and 415. The segment covering 414–425 (DSEDDEEDEEIE) has biased composition (acidic residues). The 170-residue stretch at 433–602 (NFPSPFTNIL…SVDTGEADTE (170 aa)) folds into the Helicase C-terminal domain. One can recognise a Dicer dsRNA-binding fold domain in the interval 629–721 (AIGHVNRYCA…MPVGKETVKY (93 aa)). The region spanning 894 to 1041 (KFMEDIEKSE…LVPELCAIHP (148 aa)) is the PAZ domain. Phosphoserine occurs at positions 1015 and 1160. 2 stretches are compositionally biased toward polar residues: residues 1246 to 1255 (NANTSTSDGS) and 1277 to 1290 (SEQS…SRTL). The segment at 1246-1291 (NANTSTSDGSPVTAAVPGTTETGEAPPDRTASEQSPSPGYSSRTLG) is disordered. Positions 1276–1404 (ASEQSPSPGY…TEKWEKDEMT (129 aa)) constitute an RNase III 1 domain. Mg(2+) contacts are provided by Glu-1316, Glu-1396, and Glu-1399. A phosphoserine mark is found at Ser-1461, Ser-1469, and Ser-1471. Residues 1667–1825 (FENFEKKINY…LAGAIYMDSG (159 aa)) form the RNase III 2 domain. Mg(2+)-binding residues include Glu-1706, Asp-1811, and Glu-1814. A DRBM domain is found at 1853-1915 (SPVRELLEME…ARRALRSLKA (63 aa)). The residue at position 1869 (Ser-1869) is a Phosphoserine.

This sequence belongs to the helicase family. Dicer subfamily. Component of the RISC loading complex (RLC), or micro-RNA (miRNA) loading complex (miRLC), which is composed of DICER1, AGO2 and TARBP2; DICER1 and TARBP2 are required to process precursor miRNAs (pre-miRNAs) to mature miRNAs and then load them onto AGO2. Note that the trimeric RLC/miRLC is also referred to as RISC. Interacts with DHX9, AGO1, PIWIL1 and PRKRA. Interacts with AGO2, TARBP2, EIF6, MOV10 and RPL7A (60S ribosome subunit); they form a large RNA-induced silencing complex (RISC). Interacts with BCDIN3D. Interacts (via Dicer dsRNA-binding fold domain) with ALOX5 (via PLAT domain); this interaction enhances arachidonate 5-lipoxygenase activity and modifies the miRNA precursor processing activity of DICER1. It depends on Mg(2+) as a cofactor. Mn(2+) serves as cofactor.

It is found in the cytoplasm. The enzyme catalyses Endonucleolytic cleavage to 5'-phosphomonoester.. Functionally, double-stranded RNA (dsRNA) endoribonuclease playing a central role in short dsRNA-mediated post-transcriptional gene silencing. Cleaves naturally occurring long dsRNAs and short hairpin pre-microRNAs (miRNA) into fragments of twenty-one to twenty-three nucleotides with 3' overhang of two nucleotides, producing respectively short interfering RNAs (siRNA) and mature microRNAs. SiRNAs and miRNAs serve as guide to direct the RNA-induced silencing complex (RISC) to complementary RNAs to degrade them or prevent their translation. Gene silencing mediated by siRNAs, also called RNA interference, controls the elimination of transcripts from mobile and repetitive DNA elements of the genome but also the degradation of exogenous RNA of viral origin for instance. The miRNA pathway on the other side is a mean to specifically regulate the expression of target genes. This chain is Endoribonuclease Dicer (DICER1), found in Bos taurus (Bovine).